The primary structure comprises 295 residues: AP-1-like transcription factor YAP4 (295 aa).

A phosphoserine mark is found at S85, S89, and S196. The span at A181 to P202 shows a compositional bias: polar residues. Residues A181 to E205 form a disordered region. The 59-residue stretch at P237–E295 folds into the bZIP domain. Residues R239 to K260 are basic motif. Positions I262–L271 are leucine-zipper.

Belongs to the bZIP family. YAP subfamily. As to quaternary structure, homodimer.

It is found in the cytoplasm. It localises to the nucleus. Functionally, transcription activator involved in the regulation of genes expressed in response to environmental changes and metabolic requirements. According to genome-wide promoter binding and gene expression studies it regulates, among others, genes involved in ribosome biogenesis, and protein synthesis. It may also be involved in pleiotropic drug resistance. When overexpressed it confers increased resistance to cisplatin, the DNA-alkylating agents methylmethanosulfonate, and mitomycin C, the antimalarial drugs quinidine, mefloquine, and chloroquine, and increases cellular tolerance to sodium and lithium. Preferentially binds 5'-TTACTAA-3'. In Saccharomyces cerevisiae (strain ATCC 204508 / S288c) (Baker's yeast), this protein is AP-1-like transcription factor YAP4 (CIN5).